The primary structure comprises 134 residues: Retinol-binding protein 2 (134 aa).

Residues lysine 41 and glutamine 109 each contribute to the all-trans-retinol site.

This sequence belongs to the calycin superfamily. Fatty-acid binding protein (FABP) family.

Its subcellular location is the cytoplasm. Its function is as follows. Intracellular transport of retinol. The sequence is that of Retinol-binding protein 2 (RBP2) from Sus scrofa (Pig).